The following is a 149-amino-acid chain: Ribonuclease pancreatic alpha-type (149 aa).

Residues 1–25 (MGLEKSFILFSLLVLVLGWVQPSLG) form the signal peptide. Residues Lys-32 and Arg-35 each contribute to the substrate site. His-37 (proton acceptor) is an active-site residue. 4 disulfide bridges follow: Cys-51/Cys-109, Cys-65/Cys-120, Cys-83/Cys-135, and Cys-90/Cys-97. Residues 66–70 (KPVNT), Lys-91, and Arg-110 contribute to the substrate site. His-144 acts as the Proton donor in catalysis.

It belongs to the pancreatic ribonuclease family. Monomer.

The protein resides in the secreted. The enzyme catalyses an [RNA] containing cytidine + H2O = an [RNA]-3'-cytidine-3'-phosphate + a 5'-hydroxy-ribonucleotide-3'-[RNA].. The catalysed reaction is an [RNA] containing uridine + H2O = an [RNA]-3'-uridine-3'-phosphate + a 5'-hydroxy-ribonucleotide-3'-[RNA].. Functionally, endonuclease that catalyzes the cleavage of RNA on the 3' side of pyrimidine nucleotides. Acts on single-stranded and double-stranded RNA. The sequence is that of Ribonuclease pancreatic alpha-type from Rattus fuscipes (Bush rat).